A 377-amino-acid chain; its full sequence is Mitogen-activated protein kinase pmk-1 (377 aa).

The region spanning 35–319 (YINLTPIGTG…AKEAMEHEYL (285 aa)) is the Protein kinase domain. ATP-binding positions include 41-49 (IGTGAYGTV) and Lys64. Asp179 serves as the catalytic Proton acceptor. Thr191 is modified (phosphothreonine). Positions 191-193 (TGY) match the TXY motif. A Phosphotyrosine modification is found at Tyr193.

This sequence belongs to the protein kinase superfamily. CMGC Ser/Thr protein kinase family. MAP kinase subfamily. As to quaternary structure, interacts with transcription factor atf-7; perhaps in a manner dependent on dual specificity protein kinase sek-1. It depends on Mg(2+) as a cofactor. Requires Mn(2+) as cofactor. In terms of processing, dually phosphorylated on Thr-191 and Tyr-193, probably by sek-1, which activates the enzyme. Increased phosphorylation in response to the heavy metal arsenite. Increased phosphorylation in response to intestinal colonization by probiotic Lactobacillus fermentum strain JDFM216. Expressed in intestinal cells.

It localises to the nucleus. It catalyses the reaction L-seryl-[protein] + ATP = O-phospho-L-seryl-[protein] + ADP + H(+). The catalysed reaction is L-threonyl-[protein] + ATP = O-phospho-L-threonyl-[protein] + ADP + H(+). With respect to regulation, activated by phosphorylation on threonine and tyrosine. Inhibited by pyridinyl-imidazole related compounds. Functionally, serine/threonine kinase which responds to activation by environmental stress and pro-inflammatory cytokines by phosphorylating downstream targets. As part of a MAP kinase signaling pathway, plays a role in modulation of lifespan and immunity. Phosphorylates skn-1 which probably regulates skn-1 nuclear translocation in response to oxidative stress. Probably by activating skn-1, involved in the up-regulation of gcs-1 and glutathione-S-transferase gst-4 expression upon bacteria infection. Up-regulates expression of gcs-1 in intestinal cells upon arsenite treatment. Functions downstream of the MAPKK sek-1 and the MAPKKK nsy-1 as the MAP kinase which regulates pathogen resistance and responses to oxidative stress. Required for expression of antimicrobial peptide nlp-29 in response to fungal infection or physical injury. Involved in resistance to the nematotoxic C.cinerea galectin (Cgl2). May play a redundant role with other MAP kinases in susceptibility to anoxia, downstream of tir-1/nsy-1. Phosphorylates transcription factor rnt-1 during oxidative stress which results in rnt-1 stabilization in the intestine. Phosphorylates transcription factor atf-7 during pathogen infection resulting in modulation of target genes. Probably downstream of nsy-1 and sek-1, involved in germline apoptosis induced by heavy metals, such as Cu(2+). Regulates the basal expression of immune effector genes including irg-4, irg-5, mul-1 and drd-50. In Caenorhabditis elegans, this protein is Mitogen-activated protein kinase pmk-1.